The sequence spans 421 residues: uncharacterized protein (421 aa).

It belongs to the glycosyltransferase 28 family.

This is an uncharacterized protein from Mycobacterium leprae (strain TN).